The primary structure comprises 970 residues: Toxin subunit YenC2 (970 aa).

9 RHS repeats span residues 168 to 182 (AGQC…GLIQ), 297 to 311 (GVVT…TQRL), 329 to 343 (LQDL…GNVL), 361 to 375 (VPEN…YQLV), 408 to 422 (NYTR…GNLM), 500 to 514 (DDSE…SQRI), 580 to 594 (NDQI…TCSS), 606 to 620 (SMEE…AVWA), and 640 to 654 (DATG…YYQP). The RHS-repeat associated core domain stretch occupies residues 610–690 (YYPYGGTAVW…PLRLTDPDGM (81 aa)). The segment at 849 to 950 (TEAFITGIRS…YNCSGIISGL (102 aa)) is deaminase domain.

Belongs to the RHS family. As to quaternary structure, semipurified toxin complex consists of at least YenA1-YenA2-YenB-YenC1-YenC2-Chi1-Chi2. YenB and the N-terminus of YenC2 form a large hollow shell of beta-strands. The shell is closed at both ends, within which the C-terminus of YenC2 is probably found. The C-terminal region dissociates from the YenB-YenC2 complex at pH 4.5 but not 7.5. The Yen-TC:K9 subcomplex is about 26 nm tall and 22 nm in diameter with 5-fold symmetry and 5 copies of YenA1, YenA2, Chi1 and Chi2; the chitinase subunits may be solvent accessible on the exterior the complex. The Yen-TC:K9 subcomplex has no insecticidal activity. The native complex with additional YenB, YenC1 and YenC2 subunits is 16 nm taller and is insecticidal; the toxicity-conferring subunits are present at about 1 copy each.

It is found in the secreted. Its activity is regulated as follows. Toxin complex is secreted when grown at 25 degrees Celsius or less; at higher temperatures the proteins are present intracellularly but not secreted. In terms of biological role, part of an orally active toxin complex (TC) with strong insecticidal effects on larvae of the Coleoptera Costelytra zealandica, Acrossidius tasmania and Adoryphorus couloni and some Lepidoptera larvae. The TC has an endochitinase activity. This is Toxin subunit YenC2 from Yersinia entomophaga.